The primary structure comprises 86 residues: Large ribosomal subunit protein bL31B (86 aa).

It belongs to the bacterial ribosomal protein bL31 family. Type B subfamily. As to quaternary structure, part of the 50S ribosomal subunit.

The protein is Large ribosomal subunit protein bL31B of Erwinia tasmaniensis (strain DSM 17950 / CFBP 7177 / CIP 109463 / NCPPB 4357 / Et1/99).